A 226-amino-acid chain; its full sequence is Biosynthetic peptidoglycan transglycosylase (226 aa).

The helical transmembrane segment at 5-25 (IGVTVLAVVGLLLLPYLLTPL) threads the bilayer.

The protein belongs to the glycosyltransferase 51 family.

The protein resides in the cell inner membrane. The catalysed reaction is [GlcNAc-(1-&gt;4)-Mur2Ac(oyl-L-Ala-gamma-D-Glu-L-Lys-D-Ala-D-Ala)](n)-di-trans,octa-cis-undecaprenyl diphosphate + beta-D-GlcNAc-(1-&gt;4)-Mur2Ac(oyl-L-Ala-gamma-D-Glu-L-Lys-D-Ala-D-Ala)-di-trans,octa-cis-undecaprenyl diphosphate = [GlcNAc-(1-&gt;4)-Mur2Ac(oyl-L-Ala-gamma-D-Glu-L-Lys-D-Ala-D-Ala)](n+1)-di-trans,octa-cis-undecaprenyl diphosphate + di-trans,octa-cis-undecaprenyl diphosphate + H(+). It functions in the pathway cell wall biogenesis; peptidoglycan biosynthesis. Peptidoglycan polymerase that catalyzes glycan chain elongation from lipid-linked precursors. The polypeptide is Biosynthetic peptidoglycan transglycosylase (Nitrobacter hamburgensis (strain DSM 10229 / NCIMB 13809 / X14)).